Here is a 373-residue protein sequence, read N- to C-terminus: Bilirubin reductase (373 aa).

Q92 is an FMN binding site. Catalysis depends on R168, which acts as the Proton donor. K215 serves as a coordination point for FMN. 4 residues coordinate [4Fe-4S] cluster: C344, C347, C351, and C363.

Belongs to the NADH:flavin oxidoreductase/NADH oxidase family. FMN is required as a cofactor. [4Fe-4S] cluster serves as cofactor.

The catalysed reaction is urobilinogen + 4 A = (4Z,15Z)-bilirubin IXalpha + 4 AH2. It catalyses the reaction urobilinogen + 2 A = (4Z,15Z)-mesobilirubin IXalpha + 2 AH2. Its pathway is porphyrin-containing compound metabolism; protoheme degradation. Bilirubin reductase that catalyzes reduction of mesobilirubin and/or bilirubin to urobilinogen, a key step during heme degradation. Cooperates with BilS, which is probably involved in electron transfer for BilR. Urobilinogen then spontaneously degrades into urobilin, which gives urine its distinctive yellow color. The polypeptide is Bilirubin reductase (Clostridium symbiosum (strain WAL-14163)).